Consider the following 457-residue polypeptide: tRNA-2-methylthio-N(6)-dimethylallyladenosine synthase (457 aa).

In terms of domain architecture, MTTase N-terminal spans 3–120 (KKVYVKTFGC…LPQMIDARRE (118 aa)). [4Fe-4S] cluster contacts are provided by Cys-12, Cys-49, Cys-83, Cys-157, Cys-161, and Cys-164. The 235-residue stretch at 143-377 (RVEGPSAFVS…QATIEENVAR (235 aa)) folds into the Radical SAM core domain. One can recognise a TRAM domain in the interval 380–447 (QSMLGKVERI…PHSLRGELVL (68 aa)).

It belongs to the methylthiotransferase family. MiaB subfamily. As to quaternary structure, monomer. [4Fe-4S] cluster is required as a cofactor.

Its subcellular location is the cytoplasm. It catalyses the reaction N(6)-dimethylallyladenosine(37) in tRNA + (sulfur carrier)-SH + AH2 + 2 S-adenosyl-L-methionine = 2-methylsulfanyl-N(6)-dimethylallyladenosine(37) in tRNA + (sulfur carrier)-H + 5'-deoxyadenosine + L-methionine + A + S-adenosyl-L-homocysteine + 2 H(+). Catalyzes the methylthiolation of N6-(dimethylallyl)adenosine (i(6)A), leading to the formation of 2-methylthio-N6-(dimethylallyl)adenosine (ms(2)i(6)A) at position 37 in tRNAs that read codons beginning with uridine. The polypeptide is tRNA-2-methylthio-N(6)-dimethylallyladenosine synthase (Burkholderia pseudomallei (strain 1710b)).